The chain runs to 78 residues: Large ribosomal subunit protein uL24 (78 aa).

The segment at 52–78 is disordered; sequence PSEKTPNGGHVNKEMPIDISNVAKVEG.

The protein belongs to the universal ribosomal protein uL24 family. Part of the 50S ribosomal subunit.

In terms of biological role, one of two assembly initiator proteins, it binds directly to the 5'-end of the 23S rRNA, where it nucleates assembly of the 50S subunit. Its function is as follows. One of the proteins that surrounds the polypeptide exit tunnel on the outside of the subunit. This is Large ribosomal subunit protein uL24 from Campylobacter concisus (strain 13826).